We begin with the raw amino-acid sequence, 257 residues long: Non-homologous end joining protein Ku (257 aa).

The Ku domain maps to 9-184 (TFGMVAIPIG…YTKPEVNEQE (176 aa)).

The protein belongs to the prokaryotic Ku family. In terms of assembly, homodimer. Interacts with LigD.

In terms of biological role, with LigD forms a non-homologous end joining (NHEJ) DNA repair enzyme, which repairs dsDNA breaks with reduced fidelity. Binds linear dsDNA with 5'- and 3'- overhangs but not closed circular dsDNA nor ssDNA. Recruits and stimulates the ligase activity of LigD. This is Non-homologous end joining protein Ku from Lachnoclostridium phytofermentans (strain ATCC 700394 / DSM 18823 / ISDg) (Clostridium phytofermentans).